Reading from the N-terminus, the 867-residue chain is Ent-copalyl diphosphate synthase 1, chloroplastic (867 aa).

The N-terminal 35 residues, 1 to 35, are a transit peptide targeting the chloroplast; the sequence is MIHLHSPPTAPAAFGGAGSADWRRRRRWSWSSSSR. A disordered region spans residues 1-134; the sequence is MIHLHSPPTA…ADEEADDELQ (134 aa). A compositionally biased stretch (basic and acidic residues) spans 51–64; the sequence is RGGDDGGGEDHHAD. Positions 74 to 89 are enriched in low complexity; the sequence is AWRARATTAGVSSSSS. The segment covering 99-121 has biased composition (basic and acidic residues); it reads IEHETPRITKWPNESRDLDDHQQ. Acidic residues predominate over residues 124–133; the sequence is EADEEADDEL. A substrate-binding site is contributed by lysine 286. A DXDD motif motif is present at residues 418–421; that stretch reads EVDD. Lysine 504 contacts substrate.

The protein belongs to the terpene synthase family. It depends on Mg(2+) as a cofactor.

Its subcellular location is the plastid. The protein resides in the chloroplast. It catalyses the reaction (2E,6E,10E)-geranylgeranyl diphosphate = ent-copalyl diphosphate. It participates in plant hormone biosynthesis; gibberellin biosynthesis. In terms of biological role, catalyzes the conversion of geranylgeranyl diphosphate to the gibberellin precursor ent-copalyl diphosphate. The protein is Ent-copalyl diphosphate synthase 1, chloroplastic (CPS1) of Oryza sativa subsp. japonica (Rice).